Here is a 117-residue protein sequence, read N- to C-terminus: Non-specific lipid-transfer protein 1 (117 aa).

The signal sequence occupies residues Met-1–Ala-26. Disulfide bonds link Cys-29–Cys-76, Cys-39–Cys-53, Cys-54–Cys-99, and Cys-74–Cys-113.

The protein belongs to the plant LTP family.

In terms of biological role, plant non-specific lipid-transfer proteins transfer phospholipids as well as galactolipids across membranes. May play a role in wax or cutin deposition in the cell walls of expanding epidermal cells and certain secretory tissues. The sequence is that of Non-specific lipid-transfer protein 1 from Prunus dulcis (Almond).